The primary structure comprises 2839 residues: Neurofibromin (2839 aa).

Residue A2 is modified to N-acetylalanine. Phosphoserine occurs at positions 864 and 876. Positions 1251–1482 constitute a Ras-GAP domain; sequence HLLYQLLWNM…DAARRFFLDI (232 aa). The 159-residue stretch at 1580–1738 folds into the CRAL-TRIO domain; it reads EKEEFKALKT…ATLALEEDLK (159 aa). The lipid binding stretch occupies residues 1580 to 1837; the sequence is EKEEFKALKT…RTRWELSQPD (258 aa). Residues S2188 and S2467 each carry the phosphoserine modification. T2514 is subject to Phosphothreonine. S2515, S2521, S2523, and S2543 each carry phosphoserine. The Bipartite nuclear localization signal motif lies at 2555–2571; the sequence is KRQEMESGITTPPKMRR. T2565 is subject to Phosphothreonine. Phosphoserine is present on residues S2597, S2802, and S2817. The segment at 2787–2839 is disordered; sequence TSQHSPGIDKENVELSPTTGHCNSGRTRHGSASQVQKQRSAGSFKRNSIKKIV. The segment covering 2801–2827 has biased composition (polar residues); that stretch reads LSPTTGHCNSGRTRHGSASQVQKQRSA.

Interacts with HTR6. Interacts with SPRED2. Post-translationally, ubiquitinated by RNF7/RBX2, leading to its degradation. In terms of tissue distribution, detected in brain, peripheral nerve, lung, colon and muscle.

The protein localises to the nucleus. The protein resides in the nucleolus. It localises to the cell membrane. In terms of biological role, stimulates the GTPase activity of Ras. NF1 shows greater affinity for Ras GAP, but lower specific activity. May be a regulator of Ras activity. The sequence is that of Neurofibromin (NF1) from Homo sapiens (Human).